The chain runs to 210 residues: Transmembrane protein 61 (210 aa).

2 consecutive transmembrane segments (helical) span residues 18 to 38 (YCMTVSGTVVLVAGTLCFAWW) and 69 to 89 (VSFVCCGAGGLLLLIGLLWSV). A disordered region spans residues 140–172 (VAEGPPTPPAYPTEEALEPSGSRDALLSTQPAW).

Its subcellular location is the membrane. This Homo sapiens (Human) protein is Transmembrane protein 61 (TMEM61).